The chain runs to 420 residues: Putative FBD-associated F-box protein At1g78730 (420 aa).

An F-box domain is found at 21-71 (LDWLRKLPDSLLCQVFLNLPTKDVVKTSVLSSTWGNIWRSVPGLDLGYGDF). Positions 341 to 390 (ISILPGPQCNLPALEFVDILKPMVEKETELKLMSYFLEKSTILKKLTLRL) constitute an FBD domain.

This Arabidopsis thaliana (Mouse-ear cress) protein is Putative FBD-associated F-box protein At1g78730.